We begin with the raw amino-acid sequence, 705 residues long: Fatty acid oxidation complex subunit alpha (705 aa).

The interval 1–190 is enoyl-CoA hydratase; that stretch reads MSEQKAFNLK…KLGVVDACVP (190 aa). Residues 308-705 are 3-hydroxyacyl-CoA dehydrogenase; sequence SKVGMVGVLG…AGEGRRFYDN (398 aa).

The protein in the N-terminal section; belongs to the enoyl-CoA hydratase/isomerase family. This sequence in the central section; belongs to the 3-hydroxyacyl-CoA dehydrogenase family. In terms of assembly, heterotetramer of two alpha chains (FadJ) and two beta chains (FadI).

The protein localises to the cytoplasm. The catalysed reaction is a (3S)-3-hydroxyacyl-CoA = a (2E)-enoyl-CoA + H2O. It catalyses the reaction a 4-saturated-(3S)-3-hydroxyacyl-CoA = a (3E)-enoyl-CoA + H2O. The enzyme catalyses a (3S)-3-hydroxyacyl-CoA + NAD(+) = a 3-oxoacyl-CoA + NADH + H(+). It carries out the reaction (3S)-3-hydroxybutanoyl-CoA = (3R)-3-hydroxybutanoyl-CoA. It participates in lipid metabolism; fatty acid beta-oxidation. Its function is as follows. Catalyzes the formation of a hydroxyacyl-CoA by addition of water on enoyl-CoA. Also exhibits 3-hydroxyacyl-CoA epimerase and 3-hydroxyacyl-CoA dehydrogenase activities. This chain is Fatty acid oxidation complex subunit alpha, found in Vibrio vulnificus (strain CMCP6).